Consider the following 272-residue polypeptide: Tumor necrosis factor receptor superfamily member 4 (272 aa).

An N-terminal signal peptide occupies residues 1 to 19 (MYVWVQQPTALLLLALTLG). Topologically, residues 20-211 (VTARRLNCVK…PPTLVTPEGP (192 aa)) are extracellular. 2 TNFR-Cys repeats span residues 26 to 61 (NCVK…TLCH) and 62 to 103 (PCET…DTVC). 8 disulfide bridges follow: Cys-27–Cys-38, Cys-39–Cys-52, Cys-42–Cys-60, Cys-63–Cys-77, Cys-80–Cys-95, Cys-83–Cys-103, Cys-105–Cys-123, and Cys-126–Cys-139. The stretch at 104–124 (RCRPGTQPRQDSGYKLGVDCV) is one TNFR-Cys 3; truncated repeat. A TNFR-Cys 4 repeat occupies 125 to 165 (PCPPGHFSPGNNQACKPWTNCTLSGKQTRHPASDSLDAVCE). Asn-144 carries N-linked (GlcNAc...) asparagine glycosylation. An intrachain disulfide couples Cys-145 to Cys-164. The chain crosses the membrane as a helical span at residues 212–236 (AFAVLLGLGLGLLAPLTVLLALYLL). Residues 237 to 272 (RKAWRLPNTPKPCWGNSFRTPIQEEHTDAHFTLAKI) are Cytoplasmic-facing.

In terms of assembly, interacts with TRAF2, TRAF3 and TRAF5. As to expression, expressed in CD4(+) T-cells and in T-helper Th17 cells (at protein level).

It is found in the membrane. Functionally, receptor for TNFSF4/OX40L/GP34. Is a costimulatory molecule implicated in long-term T-cell immunity. The chain is Tumor necrosis factor receptor superfamily member 4 (Tnfrsf4) from Mus musculus (Mouse).